Consider the following 526-residue polypeptide: Exodeoxyribonuclease 7 large subunit (526 aa).

A disordered region spans residues 497–526; sequence AMTTEGGTPPGGAKKRSTKPAEPTKQGSLF.

The protein belongs to the XseA family. Heterooligomer composed of large and small subunits.

It is found in the cytoplasm. It catalyses the reaction Exonucleolytic cleavage in either 5'- to 3'- or 3'- to 5'-direction to yield nucleoside 5'-phosphates.. In terms of biological role, bidirectionally degrades single-stranded DNA into large acid-insoluble oligonucleotides, which are then degraded further into small acid-soluble oligonucleotides. The polypeptide is Exodeoxyribonuclease 7 large subunit (Rhizobium etli (strain ATCC 51251 / DSM 11541 / JCM 21823 / NBRC 15573 / CFN 42)).